Reading from the N-terminus, the 145-residue chain is Transcriptional regulator SlyA (145 aa).

Residues 2–135 (ELPLGSDLAR…LALLVARLEK (134 aa)) enclose the HTH marR-type domain. Positions 49–72 (QIQLAKAIGIEQPSLVRTLDQLEE) form a DNA-binding region, H-T-H motif.

This sequence belongs to the SlyA family. Homodimer.

Functionally, transcription regulator that can specifically activate or repress expression of target genes. The chain is Transcriptional regulator SlyA from Pectobacterium carotovorum subsp. carotovorum (strain PC1).